A 294-amino-acid chain; its full sequence is Elongation factor Ts (294 aa).

Positions 81–84 are involved in Mg(2+) ion dislocation from EF-Tu; it reads TDFV.

Belongs to the EF-Ts family.

The protein localises to the cytoplasm. Associates with the EF-Tu.GDP complex and induces the exchange of GDP to GTP. It remains bound to the aminoacyl-tRNA.EF-Tu.GTP complex up to the GTP hydrolysis stage on the ribosome. The sequence is that of Elongation factor Ts (tsf) from Mycoplasmopsis pulmonis (strain UAB CTIP) (Mycoplasma pulmonis).